The chain runs to 231 residues: Putative transglycosylase H16_A0665 (231 aa).

Residues 8–28 (FIKLLVLAVIGGALLAAIAIL) form a helical membrane-spanning segment.

It belongs to the glycosyltransferase 51 family.

The protein resides in the secreted. Its subcellular location is the membrane. Its pathway is cell wall biogenesis; peptidoglycan biosynthesis. Cell wall formation. The protein is Putative transglycosylase H16_A0665 of Cupriavidus necator (strain ATCC 17699 / DSM 428 / KCTC 22496 / NCIMB 10442 / H16 / Stanier 337) (Ralstonia eutropha).